Here is a 208-residue protein sequence, read N- to C-terminus: MADRGLLIVFSGPSGVGKGTVRREIFESSENQFQYSVSMTTRAQRPGEVDGVDYFFRTREEFEELIRQGQMLEYAEYVGNYYGTPLTYVNETLDKGIDVFLEIEVQGALQVKKKVPDAVFIFLTPPDLDELQDRLVGRGTDSAEVIAQRIEKAKEEIALMREYDYAIVNDQVPLAAERVKCVIEAEHFCVDRVIGHYQEMLPKSPTTR.

The 180-residue stretch at G5–E184 folds into the Guanylate kinase-like domain. G12–G19 contributes to the ATP binding site.

The protein belongs to the guanylate kinase family.

The protein resides in the cytoplasm. It carries out the reaction GMP + ATP = GDP + ADP. Its function is as follows. Essential for recycling GMP and indirectly, cGMP. The protein is Guanylate kinase of Streptococcus pneumoniae serotype 4 (strain ATCC BAA-334 / TIGR4).